Here is a 494-residue protein sequence, read N- to C-terminus: 3-octaprenyl-4-hydroxybenzoate carboxy-lyase (494 aa).

Asparagine 172 is a Mn(2+) binding site. Prenylated FMN contacts are provided by residues 175–177 (IYR), 189–191 (RWL), and 194–195 (RG). Glutamate 238 is a Mn(2+) binding site. Aspartate 287 serves as the catalytic Proton donor.

It belongs to the UbiD family. As to quaternary structure, homohexamer. Prenylated FMN serves as cofactor. It depends on Mn(2+) as a cofactor.

Its subcellular location is the cell membrane. The catalysed reaction is a 4-hydroxy-3-(all-trans-polyprenyl)benzoate + H(+) = a 2-(all-trans-polyprenyl)phenol + CO2. Its pathway is cofactor biosynthesis; ubiquinone biosynthesis. Its function is as follows. Catalyzes the decarboxylation of 3-octaprenyl-4-hydroxy benzoate to 2-octaprenylphenol, an intermediate step in ubiquinone biosynthesis. In Escherichia coli O139:H28 (strain E24377A / ETEC), this protein is 3-octaprenyl-4-hydroxybenzoate carboxy-lyase.